The following is a 164-amino-acid chain: Biogenesis of lysosome-related organelles complex 1 subunit 5 (164 aa).

Residues 36-91 (EGKRNDRELERLRESEQKIRQVQEEIPKCITESVKLKDLLEELKVAREKCHEILVK) adopt a coiled-coil conformation.

Belongs to the BLOC1S5 family. In terms of assembly, component of the biogenesis of lysosome-related organelles complex 1 (BLOC-1).

Functionally, component of the BLOC-1 complex, a complex that is required for normal biogenesis of lysosome-related organelles (LRO). May play a role in intracellular vesicle trafficking. The polypeptide is Biogenesis of lysosome-related organelles complex 1 subunit 5 (bloc1s5) (Nematostella vectensis (Starlet sea anemone)).